Reading from the N-terminus, the 607-residue chain is UvrABC system protein C (607 aa).

In terms of domain architecture, GIY-YIG spans 16–94; it reads GRPGVYRMFD…IKEWRPPYNI (79 aa). The UVR domain maps to 203–238; sequence NALTDELSGAMEQAASTLDFERAAELRDQISLLRRV.

The protein belongs to the UvrC family. As to quaternary structure, interacts with UvrB in an incision complex.

Its subcellular location is the cytoplasm. Functionally, the UvrABC repair system catalyzes the recognition and processing of DNA lesions. UvrC both incises the 5' and 3' sides of the lesion. The N-terminal half is responsible for the 3' incision and the C-terminal half is responsible for the 5' incision. This is UvrABC system protein C from Pseudomonas fluorescens (strain SBW25).